The sequence spans 1059 residues: Protein OPAQUE10 (1059 aa).

7 repeat units span residues S269–C342, S343–C416, S417–C490, S491–C564, F565–C638, S639–C712, and S713–C786. The 7 X approximate repeats stretch occupies residues S269–C786. A disordered region spans residues F511–S534. The span at P515–S534 shows a compositional bias: basic and acidic residues. Disordered stretches follow at residues Q732–S756, E856–T875, and S889–G998. A compositionally biased stretch (basic and acidic residues) spans L858–L869. 2 stretches are compositionally biased toward polar residues: residues D907–G924 and A945–S958. Residues T984–R994 show a composition bias toward basic and acidic residues. Residues V1003 to L1023 form a helical membrane-spanning segment.

As to quaternary structure, homodimer. Interacts (via N-terminus) with FL1 (via C-terminus), HIP, 19 kDa alpha-zein (AC P06677), 22 kDa alpha-zein (AC O48966), 16 kDa gamma-zein (AC P08031) and 50 kDa gamma-zein (AC C0P381). As to expression, expressed in kernels.

The protein localises to the endoplasmic reticulum membrane. Functionally, cereal endosperm protein required for the ring-shaped distribution of 22 kDa alpha- and 16 kDa gamma-zeins in protein bodies. The polypeptide is Protein OPAQUE10 (Zea mays (Maize)).